Reading from the N-terminus, the 655-residue chain is p-hydroxybenzoic acid efflux pump subunit AaeB (655 aa).

Transmembrane regions (helical) follow at residues 13-33 (FAVKLASAIVLALFVGFHFQL), 38-58 (WAVLTAAIVAAGPAFAAGGEP), 69-89 (LRIIGTFIGCIAALTIIILMI), 93-113 (LLMVLVCCIWAGFCTWLSSLV), 121-141 (WGLAGYTALIIVITIQTEPLL), 152-172 (EIVIGIVCAIVADLLFSPRSI), 370-390 (LFWLWTGWTSGSGAMVMIAVV), 407-427 (FLYGTIAALPLGALYFLVILP), 431-451 (QSMLLLCISLAVMAFFIGIEV), 459-479 (LGALASTINILVLDNPMTFHF), and 482-502 (FLDSALGQLVGCFLAMMVILL).

The protein belongs to the aromatic acid exporter ArAE (TC 2.A.85) family.

It localises to the cell inner membrane. Functionally, forms an efflux pump with AaeA. Could function as a metabolic relief valve, allowing to eliminate certain compounds when they accumulate to high levels in the cell. This chain is p-hydroxybenzoic acid efflux pump subunit AaeB, found in Enterobacter cloacae subsp. cloacae (strain ATCC 13047 / DSM 30054 / NBRC 13535 / NCTC 10005 / WDCM 00083 / NCDC 279-56).